A 67-amino-acid chain; its full sequence is Large ribosomal subunit protein bL35 (67 aa).

Belongs to the bacterial ribosomal protein bL35 family.

In Gloeothece citriformis (strain PCC 7424) (Cyanothece sp. (strain PCC 7424)), this protein is Large ribosomal subunit protein bL35.